The primary structure comprises 728 residues: Procollagen-lysine,2-oxoglutarate 5-dioxygenase 1 (728 aa).

The signal sequence occupies residues 1-18; sequence MRSLLLLAPLAWLLLVQA. N-linked (GlcNAc...) asparagine glycosylation is found at asparagine 198 and asparagine 539. Positions 637 to 728 constitute a Fe2OG dioxygenase domain; that stretch reads QFDLAFVVRY…RYIAVSFVDP (92 aa). Histidine 657 and aspartate 659 together coordinate Fe cation. N-linked (GlcNAc...) asparagine glycosylation is present at asparagine 687. Histidine 709 contacts Fe cation. Residue arginine 719 is part of the active site.

Homodimer. Identified in a complex with P3H3 and P3H4. Requires Fe(2+) as cofactor. L-ascorbate serves as cofactor. Highly expressed in the liver, heart, lung, skeletal muscle and kidney.

It is found in the rough endoplasmic reticulum membrane. The enzyme catalyses L-lysyl-[collagen] + 2-oxoglutarate + O2 = (5R)-5-hydroxy-L-lysyl-[collagen] + succinate + CO2. Part of a complex composed of PLOD1, P3H3 and P3H4 that catalyzes hydroxylation of lysine residues in collagen alpha chains and is required for normal assembly and cross-linkling of collagen fibrils. Forms hydroxylysine residues in -Xaa-Lys-Gly- sequences in collagens. These hydroxylysines serve as sites of attachment for carbohydrate units and are essential for the stability of the intermolecular collagen cross-links. The polypeptide is Procollagen-lysine,2-oxoglutarate 5-dioxygenase 1 (Plod1) (Mus musculus (Mouse)).